The following is a 154-amino-acid chain: Protein AE7-like 1 (154 aa).

The protein belongs to the MIP18 family.

May play a role in chromosome segregation through establishment of sister chromatid cohesion. Unable to complement ae7 mutants, and thus probably not involved in the cytosolic iron-sulfur assembly (CIA) pathway. This is Protein AE7-like 1 from Arabidopsis thaliana (Mouse-ear cress).